We begin with the raw amino-acid sequence, 157 residues long: Probable succinate transporter subunit YjjB (157 aa).

The next 4 helical transmembrane spans lie at 8-28, 50-70, 87-107, and 129-149; these read FALA…AMVF, MILM…SMLV, VFTV…TAMI, and FLTA…PGLW.

This sequence belongs to the ThrE exporter (TC 2.A.79) family. In terms of assembly, the transporter is composed of YjjB and YjjP.

The protein resides in the cell inner membrane. In terms of biological role, involved in succinate export with YjjP. Both proteins are required for export. This chain is Probable succinate transporter subunit YjjB, found in Escherichia coli (strain ATCC 8739 / DSM 1576 / NBRC 3972 / NCIMB 8545 / WDCM 00012 / Crooks).